Consider the following 369-residue polypeptide: 4-hydroxy-3-methylbut-2-en-1-yl diphosphate synthase (flavodoxin) (369 aa).

Residues cysteine 270, cysteine 273, cysteine 305, and glutamate 312 each coordinate [4Fe-4S] cluster.

Belongs to the IspG family. It depends on [4Fe-4S] cluster as a cofactor.

It catalyses the reaction (2E)-4-hydroxy-3-methylbut-2-enyl diphosphate + oxidized [flavodoxin] + H2O + 2 H(+) = 2-C-methyl-D-erythritol 2,4-cyclic diphosphate + reduced [flavodoxin]. It participates in isoprenoid biosynthesis; isopentenyl diphosphate biosynthesis via DXP pathway; isopentenyl diphosphate from 1-deoxy-D-xylulose 5-phosphate: step 5/6. Its function is as follows. Converts 2C-methyl-D-erythritol 2,4-cyclodiphosphate (ME-2,4cPP) into 1-hydroxy-2-methyl-2-(E)-butenyl 4-diphosphate. The sequence is that of 4-hydroxy-3-methylbut-2-en-1-yl diphosphate synthase (flavodoxin) from Pseudomonas putida (strain W619).